Reading from the N-terminus, the 188-residue chain is XLVQPGVLIFCDDPSYNSMSDSTHLFTLHFVXYSENGSDSVYSLQFTSRSDCPAGSNKPWTECDYLSYERRFNERLSTGHKQVYCLLDDVIIPEKAPCLGCPMEVDENSEDLKFPLSVSISKAGALPTMFTRRRPPGWSPLRRKKPISCNATVYMTETEADTKDLNDLCVPDDQNAGYANCNSTVNVA.

3 N-linked (GlcNAc...) asparagine glycosylation sites follow: N36, N150, and N182.

In terms of processing, bradykinin is released from kininogen by kallikrein. Post-translationally, N-glycosylated. Contains O-acetylated sialic acids as terminal elements on biantennary and triantennary N-glycans.

Its function is as follows. Inhibits papain and ficin (cysteine proteinases) but not trypsin (a serine proteinase). This Anarhichas minor (Arctic spotted wolffish) protein is Kininogen.